The chain runs to 290 residues: Homeobox protein EMX1 (290 aa).

The segment at residues 192-251 (PKRIRTAFSPSQLLRLERAFEKNHYVVGAERKQLAGSLSLSETQVKVWFQNRRTKYKRQK) is a DNA-binding region (homeobox). Positions 249–290 (RQKLEEEGPESEQKKKGSHHINRWRIATKQANGEDIDVTSND) are disordered. The span at 250-263 (QKLEEEGPESEQKK) shows a compositional bias: basic and acidic residues.

The protein belongs to the EMX homeobox family. In terms of assembly, interacts with WRD11 (via the N-terminal and the central portion of the protein); the interaction associates EMX1 with GLI3. Cerebral cortex.

It localises to the nucleus. Its subcellular location is the cytoplasm. Transcription factor, which in cooperation with EMX2, acts to generate the boundary between the roof and archipallium in the developing brain. May function in combinations with OTX1/2 to specify cell fates in the developing central nervous system. This Homo sapiens (Human) protein is Homeobox protein EMX1.